A 440-amino-acid polypeptide reads, in one-letter code: UDP-N-acetylmuramoylalanine--D-glutamate ligase (440 aa).

109-115 serves as a coordination point for ATP; the sequence is GTNGKTT.

The protein belongs to the MurCDEF family.

It localises to the cytoplasm. The catalysed reaction is UDP-N-acetyl-alpha-D-muramoyl-L-alanine + D-glutamate + ATP = UDP-N-acetyl-alpha-D-muramoyl-L-alanyl-D-glutamate + ADP + phosphate + H(+). It functions in the pathway cell wall biogenesis; peptidoglycan biosynthesis. Cell wall formation. Catalyzes the addition of glutamate to the nucleotide precursor UDP-N-acetylmuramoyl-L-alanine (UMA). This is UDP-N-acetylmuramoylalanine--D-glutamate ligase from Rubrobacter xylanophilus (strain DSM 9941 / JCM 11954 / NBRC 16129 / PRD-1).